A 307-amino-acid chain; its full sequence is 2-dehydropantoate 2-reductase (307 aa).

Residues 7 to 12 (GSGAMG), Asn102, and Ala128 each bind NADP(+). Asn102 contributes to the substrate binding site. Lys184 functions as the Proton donor in the catalytic mechanism. Substrate contacts are provided by Asn188, Asn192, and Ser255. Glu268 provides a ligand contact to NADP(+).

It belongs to the ketopantoate reductase family.

Its subcellular location is the cytoplasm. The enzyme catalyses (R)-pantoate + NADP(+) = 2-dehydropantoate + NADPH + H(+). The protein operates within cofactor biosynthesis; (R)-pantothenate biosynthesis; (R)-pantoate from 3-methyl-2-oxobutanoate: step 2/2. Catalyzes the NADPH-dependent reduction of ketopantoate into pantoic acid. The chain is 2-dehydropantoate 2-reductase (apbA) from Streptococcus pyogenes serotype M6 (strain ATCC BAA-946 / MGAS10394).